Reading from the N-terminus, the 241-residue chain is Phosphoribosyl isomerase A (241 aa).

Aspartate 11 functions as the Proton acceptor in the catalytic mechanism. Aspartate 130 (proton donor) is an active-site residue.

It belongs to the HisA/HisF family.

It localises to the cytoplasm. The enzyme catalyses 1-(5-phospho-beta-D-ribosyl)-5-[(5-phospho-beta-D-ribosylamino)methylideneamino]imidazole-4-carboxamide = 5-[(5-phospho-1-deoxy-D-ribulos-1-ylimino)methylamino]-1-(5-phospho-beta-D-ribosyl)imidazole-4-carboxamide. The catalysed reaction is N-(5-phospho-beta-D-ribosyl)anthranilate = 1-(2-carboxyphenylamino)-1-deoxy-D-ribulose 5-phosphate. The protein operates within amino-acid biosynthesis; L-histidine biosynthesis; L-histidine from 5-phospho-alpha-D-ribose 1-diphosphate: step 4/9. It functions in the pathway amino-acid biosynthesis; L-tryptophan biosynthesis; L-tryptophan from chorismate: step 3/5. Involved in both the histidine and tryptophan biosynthetic pathways. This is Phosphoribosyl isomerase A from Streptomyces griseus subsp. griseus (strain JCM 4626 / CBS 651.72 / NBRC 13350 / KCC S-0626 / ISP 5235).